The chain runs to 518 residues: Probable cytosol aminopeptidase (518 aa).

Residues lysine 270 and aspartate 275 each coordinate Mn(2+). Lysine 282 is an active-site residue. Aspartate 293, aspartate 352, and glutamate 354 together coordinate Mn(2+). Residue arginine 356 is part of the active site. Residues 495–507 show a composition bias toward polar residues; that stretch reads SRTTRQPGSTGET. The interval 495-518 is disordered; sequence SRTTRQPGSTGETGSRKNRRKSKE.

The protein belongs to the peptidase M17 family. Mn(2+) serves as cofactor.

Its subcellular location is the cytoplasm. It carries out the reaction Release of an N-terminal amino acid, Xaa-|-Yaa-, in which Xaa is preferably Leu, but may be other amino acids including Pro although not Arg or Lys, and Yaa may be Pro. Amino acid amides and methyl esters are also readily hydrolyzed, but rates on arylamides are exceedingly low.. The enzyme catalyses Release of an N-terminal amino acid, preferentially leucine, but not glutamic or aspartic acids.. Functionally, presumably involved in the processing and regular turnover of intracellular proteins. Catalyzes the removal of unsubstituted N-terminal amino acids from various peptides. The sequence is that of Probable cytosol aminopeptidase from Nitrosospira multiformis (strain ATCC 25196 / NCIMB 11849 / C 71).